Here is a 228-residue protein sequence, read N- to C-terminus: uncharacterized protein (228 aa).

This is an uncharacterized protein from Acidianus ambivalens (Desulfurolobus ambivalens).